Consider the following 193-residue polypeptide: Interleukin-18 (193 aa).

A propeptide spanning residues 1 to 36 is cleaved from the precursor; sequence MAAEQVEDNCISFVEMKFINNTLYFVAENDEDLESD.

This sequence belongs to the IL-1 family. Forms a ternary complex with ligand-binding receptor subunit IL18R1 and signaling receptor subunit IL18RAP at the plasma membrane. Mature IL18 first binds to IL18R1 forming a low affinity binary complex, which then interacts with IL18RAP to form a high affinity ternary complex that signals inside the cell. Interacts with cargo receptor TMED10; the interaction mediates the translocation from the cytoplasm into the ERGIC (endoplasmic reticulum-Golgi intermediate compartment) and thereby secretion. Post-translationally, the pro-IL-18 precursor is processed by CASP1, CASP4 or CASP5 to yield its mature, active form. The pro-IL-18 precursor features autoinhibitory interactions between the propeptide and the post-cleavage-site region, preventing recognition by the IL18R1 receptor. Processing by CASP1, CASP4 or CASP5 induces conformational changes to generate critical receptor-binding sites. The mature form is then secreted and released in the extracellular milieu by passing through the gasdermin-D (GSDMD) pore. In contrast, cleavage by CASP3 inactivates IL18.

It is found in the cytoplasm. Its subcellular location is the cytosol. It localises to the secreted. In terms of biological role, pro-inflammatory cytokine primarily involved in epithelial barrier repair, polarized T-helper 1 (Th1) cell and natural killer (NK) cell immune responses. Upon binding to IL18R1 and IL18RAP, forms a signaling ternary complex which activates NF-kappa-B, triggering synthesis of inflammatory mediators. Synergizes with IL12/interleukin-12 to induce IFNG synthesis from T-helper 1 (Th1) cells and natural killer (NK) cells. Involved in transduction of inflammation downstream of pyroptosis: its mature form is specifically released in the extracellular milieu by passing through the gasdermin-D (GSDMD) pore. This chain is Interleukin-18 (IL18), found in Boselaphus tragocamelus (Nilgai).